Reading from the N-terminus, the 229-residue chain is 5'-methylthioadenosine/S-adenosylhomocysteine nucleosidase (229 aa).

Glu12 (proton acceptor) is an active-site residue. Substrate-binding positions include Gly78, Ile152, and 173 to 174; that span reads ME. Catalysis depends on Asp197, which acts as the Proton donor.

This sequence belongs to the PNP/UDP phosphorylase family. MtnN subfamily.

The catalysed reaction is S-adenosyl-L-homocysteine + H2O = S-(5-deoxy-D-ribos-5-yl)-L-homocysteine + adenine. It catalyses the reaction S-methyl-5'-thioadenosine + H2O = 5-(methylsulfanyl)-D-ribose + adenine. It carries out the reaction 5'-deoxyadenosine + H2O = 5-deoxy-D-ribose + adenine. Its pathway is amino-acid biosynthesis; L-methionine biosynthesis via salvage pathway; S-methyl-5-thio-alpha-D-ribose 1-phosphate from S-methyl-5'-thioadenosine (hydrolase route): step 1/2. Catalyzes the irreversible cleavage of the glycosidic bond in both 5'-methylthioadenosine (MTA) and S-adenosylhomocysteine (SAH/AdoHcy) to adenine and the corresponding thioribose, 5'-methylthioribose and S-ribosylhomocysteine, respectively. Also cleaves 5'-deoxyadenosine, a toxic by-product of radical S-adenosylmethionine (SAM) enzymes, into 5-deoxyribose and adenine. The protein is 5'-methylthioadenosine/S-adenosylhomocysteine nucleosidase of Pasteurella multocida (strain Pm70).